Reading from the N-terminus, the 1273-residue chain is Probable methionine synthase (1273 aa).

The region spanning F7–V327 is the Hcy-binding domain. Zn(2+) is bound by residues C249, C312, and C313. One can recognise a Pterin-binding domain in the interval F360–E621. The B12-binding N-terminal domain occupies K652–I749. Residues E699, G772–D776, H775, S820, T824, and A876 contribute to the methylcob(III)alamin site. The B12-binding domain occupies Q762–Q897. Positions S927–D1273 constitute an AdoMet activation domain. Residues D977, R1171, and Y1225–F1226 each bind S-adenosyl-L-methionine.

It belongs to the vitamin-B12 dependent methionine synthase family. Methylcob(III)alamin is required as a cofactor. Zn(2+) serves as cofactor.

The enzyme catalyses (6S)-5-methyl-5,6,7,8-tetrahydrofolate + L-homocysteine = (6S)-5,6,7,8-tetrahydrofolate + L-methionine. Its pathway is amino-acid biosynthesis; L-methionine biosynthesis via de novo pathway; L-methionine from L-homocysteine (MetH route): step 1/1. Catalyzes the transfer of a methyl group from methyl-cobalamin to homocysteine, yielding enzyme-bound cob(I)alamin and methionine. Subsequently, remethylates the cofactor using methyltetrahydrofolate. The polypeptide is Probable methionine synthase (metr-1) (Caenorhabditis briggsae).